Reading from the N-terminus, the 291-residue chain is Elongation factor Ts (291 aa).

Residues 82-85 (TDFC) are involved in Mg(2+) ion dislocation from EF-Tu.

This sequence belongs to the EF-Ts family.

It is found in the cytoplasm. Associates with the EF-Tu.GDP complex and induces the exchange of GDP to GTP. It remains bound to the aminoacyl-tRNA.EF-Tu.GTP complex up to the GTP hydrolysis stage on the ribosome. The sequence is that of Elongation factor Ts from Methylobacillus flagellatus (strain ATCC 51484 / DSM 6875 / VKM B-1610 / KT).